The primary structure comprises 674 residues: Sodium/myo-inositol cotransporter 2 (674 aa).

The Extracellular portion of the chain corresponds to 1-25 (MESSASSPPLTQSDPLEAFPRRTLE). A helical transmembrane segment spans residues 26–46 (AGDIAVLVLYFLFVLAVGLWS). Over 47–56 (TVKTKRDTVK) the chain is Cytoplasmic. A helical transmembrane segment spans residues 57–77 (GYFLAGGNMLWWPVGASLFAS). Residues 78 to 102 (NVGSGHFVGLAGSGAAAGLSVTAYE) are Extracellular-facing. The chain crosses the membrane as a helical span at residues 103-123 (LNGLFFVLMLSWIFLPIYITG). Residues 124–140 (QVTTMPEYLRKRFGGNR) lie on the Cytoplasmic side of the membrane. The chain crosses the membrane as a helical span at residues 141–161 (IPIILAVLYLFIYIFTKISVD). Over 162–180 (MYAGAIFIQQSLHVNLYLA) the chain is Extracellular. A helical transmembrane segment spans residues 181–201 (IVGLLAVTALYTIAGGLAAVI). The Cytoplasmic segment spans residues 202-208 (YTDALQT). The chain crosses the membrane as a helical span at residues 209–229 (LIMLIGALILMGYSFAAVGGL). At 230 to 272 (EGLEEKYFLAMASNRSGNSSCGLPREDAFHIFRDPVTSDLPWP) the chain is on the extracellular side. A helical transmembrane segment spans residues 273 to 293 (GILFGMSIPSLWYWCTDQVIV). Over 294-308 (QRTLAAKNLSHAKGG) the chain is Cytoplasmic. A helical membrane pass occupies residues 309–329 (SLMAAYLKVLPLFIMVFPGMV). At 330-374 (SRVLFPDEVACADPEICRKVCSNPAGCSDIAYPKLVLELLPTGLR) the chain is on the extracellular side. The chain crosses the membrane as a helical span at residues 375 to 397 (GLMMAVMVAALTSSLTSIFNSAS). Residues 398–418 (TIFTMDLWNHLRPRASEKELM) lie on the Cytoplasmic side of the membrane. Residues 419–439 (IVGRVFVLLLVLVSILWIPVV) traverse the membrane as a helical segment. The Extracellular segment spans residues 440–446 (QASQGGQ). The chain crosses the membrane as a helical span at residues 447–467 (LFIYIQSISSYLQPPVAVVFI). The Cytoplasmic segment spans residues 468–479 (MGCFWKRANEKG). A helical transmembrane segment spans residues 480–500 (AFFGLVLGLLLGLVRLILDFI). Over 501–521 (YVQPRCDQLDERPAVVKDVHY) the chain is Extracellular. The helical transmembrane segment at 522 to 542 (LYFSMILSSVTLITVCAVSWF) threads the bilayer. Residues 543–653 (TEPPSKEMVS…SLEENPLVKT (111 aa)) are Cytoplasmic-facing. A disordered region spans residues 567 to 589 (EQVPSATPPPLTLSQNGTPEASG). Polar residues predominate over residues 578–589 (TLSQNGTPEASG). A helical transmembrane segment spans residues 654 to 674 (LLDLNLIICISCAIFLWGYFA).

It belongs to the sodium:solute symporter (SSF) (TC 2.A.21) family.

The protein localises to the membrane. It localises to the apical cell membrane. The enzyme catalyses myo-inositol(out) + 2 Na(+)(out) = myo-inositol(in) + 2 Na(+)(in). It carries out the reaction 1D-chiro-inositol(out) + 2 Na(+)(out) = 1D-chiro-inositol(in) + 2 Na(+)(in). The catalysed reaction is D-glucose(out) + 2 Na(+)(out) = D-glucose(in) + 2 Na(+)(in). It catalyses the reaction D-xylose(out) + 2 Na(+)(out) = D-xylose(in) + 2 Na(+)(in). Its activity is regulated as follows. MI transport activity inhibited by D-chiro-inositol (DCI), phlorizin (Pz) and sodium (Na(+)). Insulin increases D-chiro-inositol uptake. Its function is as follows. Involved in the sodium-dependent cotransport of myo-inositol (MI) with a Na(+):MI stoichiometry of 2:1. Exclusively responsible for apical MI transport and absorption in intestine. Can also transport D-chiro-inositol (DCI) but not L-fucose. Exhibits stereospecific cotransport of both D-glucose and D-xylose. May induce apoptosis through the TNF-alpha, PDCD1 pathway. May play a role in the regulation of MI concentration in serum, involving reabsorption in at least the proximal tubule of the kidney. The chain is Sodium/myo-inositol cotransporter 2 from Bos taurus (Bovine).